Reading from the N-terminus, the 294-residue chain is Protein PET54 (294 aa).

Its subcellular location is the mitochondrion inner membrane. Activator of specific mitochondrial mRNAs. PET54 is involved in the excision of intron aI5-beta from pre-mRNA for cytochrome c oxidase I (COX1) and plays a role in promoting the translation of COX3. This Saccharomyces bayanus (Yeast) protein is Protein PET54 (PET54).